Consider the following 377-residue polypeptide: Heat stress transcription factor B-2b (377 aa).

The disordered stretch occupies residues 1-56 (MPGEQTGETPTVAGVGGGGAGCSAGNSGGSSGCGAGGGGGGSGGGGGGGGDSQRSI). Over residues 14–51 (GVGGGGAGCSAGNSGGSSGCGAGGGGGGSGGGGGGGGD) the composition is skewed to gly residues. A DNA-binding region spans residues 57-151 (PTPFLTKTYQ…LLRDIQRRKI (95 aa)). The tract at residues 220-265 (TTSCTTAPELVEENERLRKDNERLRKEMTKLKGLYANIYTLMANFT) is hydrophobic repeat HR-A/B. The Nuclear localization signal signature appears at 323–327 (KRARR). Residues 326-377 (RREEELGAAEEEDDDRREAAAQEGEQSSDVKAEPMEENNSGNHNGSWLELGK) are disordered. Residues 331 to 340 (LGAAEEEDDD) show a composition bias toward acidic residues.

The protein belongs to the HSF family. Class B subfamily. In terms of assembly, homotrimer. In terms of processing, exhibits temperature-dependent phosphorylation.

Its subcellular location is the nucleus. Its function is as follows. Transcriptional regulator that specifically binds DNA sequence 5'-AGAAnnTTCT-3' known as heat shock promoter elements (HSE). The sequence is that of Heat stress transcription factor B-2b (HSFB2B) from Arabidopsis thaliana (Mouse-ear cress).